Reading from the N-terminus, the 262-residue chain is Phosphate import ATP-binding protein PstB (262 aa).

The region spanning 16–257 is the ABC transporter domain; sequence IDVRNLNFYY…PHRKETEDYI (242 aa). 48 to 55 is a binding site for ATP; it reads GPSGCGKS.

This sequence belongs to the ABC transporter superfamily. Phosphate importer (TC 3.A.1.7) family. As to quaternary structure, the complex is composed of two ATP-binding proteins (PstB), two transmembrane proteins (PstC and PstA) and a solute-binding protein (PstS).

The protein localises to the cell inner membrane. The catalysed reaction is phosphate(out) + ATP + H2O = ADP + 2 phosphate(in) + H(+). Functionally, part of the ABC transporter complex PstSACB involved in phosphate import. Responsible for energy coupling to the transport system. This chain is Phosphate import ATP-binding protein PstB, found in Cupriavidus metallidurans (strain ATCC 43123 / DSM 2839 / NBRC 102507 / CH34) (Ralstonia metallidurans).